The sequence spans 590 residues: UvrABC system protein C (590 aa).

The region spanning 14 to 91 (EQPGCYLMKD…IKKHDPKYNV (78 aa)) is the GIY-YIG domain. The UVR domain occupies 196 to 231 (EDVKRELAEKMHEAAETLEFERAKEYRDQIAAIEMT).

The protein belongs to the UvrC family. As to quaternary structure, interacts with UvrB in an incision complex.

The protein localises to the cytoplasm. Its function is as follows. The UvrABC repair system catalyzes the recognition and processing of DNA lesions. UvrC both incises the 5' and 3' sides of the lesion. The N-terminal half is responsible for the 3' incision and the C-terminal half is responsible for the 5' incision. This chain is UvrABC system protein C, found in Geobacillus kaustophilus (strain HTA426).